Consider the following 430-residue polypeptide: Adenylosuccinate synthetase (430 aa).

GTP is bound by residues 12-18 (GDEGKGK) and 40-42 (GHT). Residue aspartate 13 is the Proton acceptor of the active site. 2 residues coordinate Mg(2+): aspartate 13 and glycine 40. IMP is bound by residues 13-16 (DEGK), 38-41 (NAGH), threonine 128, arginine 142, glutamine 223, threonine 238, and arginine 302. The Proton donor role is filled by histidine 41. Residues 330 to 332 (SID) and 412 to 414 (SVG) contribute to the GTP site.

Belongs to the adenylosuccinate synthetase family. Homodimer. Mg(2+) is required as a cofactor.

It localises to the cytoplasm. It catalyses the reaction IMP + L-aspartate + GTP = N(6)-(1,2-dicarboxyethyl)-AMP + GDP + phosphate + 2 H(+). It participates in purine metabolism; AMP biosynthesis via de novo pathway; AMP from IMP: step 1/2. In terms of biological role, plays an important role in the de novo pathway of purine nucleotide biosynthesis. Catalyzes the first committed step in the biosynthesis of AMP from IMP. The sequence is that of Adenylosuccinate synthetase from Bacillus subtilis (strain 168).